The sequence spans 321 residues: Probable protein phosphatase 2C 44 (321 aa).

Disordered regions lie at residues 1–36 and 51–70; these read MVGR…GGKK and NSSS…NKVT. The segment covering 9–31 has biased composition (low complexity); the sequence is SASSSASCSPSSSAAGTSSSSSA. Positions 51–69 are enriched in polar residues; it reads NSSSTDTGKGRSKQSSNKV. The region spanning 70-319 is the PPM-type phosphatase domain; it reads THGFHLVEGK…DDISCIVIRF (250 aa). The Mn(2+) site is built by aspartate 107, glycine 108, aspartate 271, and aspartate 310.

It belongs to the PP2C family. Mg(2+) is required as a cofactor. The cofactor is Mn(2+).

The catalysed reaction is O-phospho-L-seryl-[protein] + H2O = L-seryl-[protein] + phosphate. The enzyme catalyses O-phospho-L-threonyl-[protein] + H2O = L-threonyl-[protein] + phosphate. In Oryza sativa subsp. japonica (Rice), this protein is Probable protein phosphatase 2C 44.